A 459-amino-acid chain; its full sequence is Bifunctional protein GlmU (459 aa).

The tract at residues 1–230 (MSNRFAVILA…FDETLGVNDR (230 aa)) is pyrophosphorylase. UDP-N-acetyl-alpha-D-glucosamine is bound by residues 9–12 (LAAG), Lys-23, Gln-73, and 78–79 (GT). Mg(2+) is bound at residue Asp-103. The UDP-N-acetyl-alpha-D-glucosamine site is built by Gly-140, Glu-155, Asn-170, and Asn-228. Asn-228 provides a ligand contact to Mg(2+). The segment at 231-251 (VALSQAEVIMKNRINHKNMVN) is linker. An N-acetyltransferase region spans residues 252 to 459 (GVTIIDPSNT…VDQLLNKKKS (208 aa)). 2 residues coordinate UDP-N-acetyl-alpha-D-glucosamine: Arg-333 and Lys-351. His-363 (proton acceptor) is an active-site residue. Positions 366 and 377 each coordinate UDP-N-acetyl-alpha-D-glucosamine. Residues 386-387 (NY), Ala-423, and Arg-440 contribute to the acetyl-CoA site.

This sequence in the N-terminal section; belongs to the N-acetylglucosamine-1-phosphate uridyltransferase family. In the C-terminal section; belongs to the transferase hexapeptide repeat family. In terms of assembly, homotrimer. The cofactor is Mg(2+).

The protein resides in the cytoplasm. The enzyme catalyses alpha-D-glucosamine 1-phosphate + acetyl-CoA = N-acetyl-alpha-D-glucosamine 1-phosphate + CoA + H(+). It carries out the reaction N-acetyl-alpha-D-glucosamine 1-phosphate + UTP + H(+) = UDP-N-acetyl-alpha-D-glucosamine + diphosphate. It functions in the pathway nucleotide-sugar biosynthesis; UDP-N-acetyl-alpha-D-glucosamine biosynthesis; N-acetyl-alpha-D-glucosamine 1-phosphate from alpha-D-glucosamine 6-phosphate (route II): step 2/2. Its pathway is nucleotide-sugar biosynthesis; UDP-N-acetyl-alpha-D-glucosamine biosynthesis; UDP-N-acetyl-alpha-D-glucosamine from N-acetyl-alpha-D-glucosamine 1-phosphate: step 1/1. It participates in bacterial outer membrane biogenesis; LPS lipid A biosynthesis. Catalyzes the last two sequential reactions in the de novo biosynthetic pathway for UDP-N-acetylglucosamine (UDP-GlcNAc). The C-terminal domain catalyzes the transfer of acetyl group from acetyl coenzyme A to glucosamine-1-phosphate (GlcN-1-P) to produce N-acetylglucosamine-1-phosphate (GlcNAc-1-P), which is converted into UDP-GlcNAc by the transfer of uridine 5-monophosphate (from uridine 5-triphosphate), a reaction catalyzed by the N-terminal domain. This chain is Bifunctional protein GlmU, found in Bacillus cytotoxicus (strain DSM 22905 / CIP 110041 / 391-98 / NVH 391-98).